A 278-amino-acid chain; its full sequence is Large ribosomal subunit protein uL2 (278 aa).

2 disordered regions span residues 32 to 54 and 221 to 278; these read SLCR…TRHI and RGMT…RNAK. Residues 232–245 are compositionally biased toward gly residues; the sequence is NGGGEGKSKSGGGR.

This sequence belongs to the universal ribosomal protein uL2 family. In terms of assembly, part of the 50S ribosomal subunit. Forms a bridge to the 30S subunit in the 70S ribosome.

Functionally, one of the primary rRNA binding proteins. Required for association of the 30S and 50S subunits to form the 70S ribosome, for tRNA binding and peptide bond formation. It has been suggested to have peptidyltransferase activity; this is somewhat controversial. Makes several contacts with the 16S rRNA in the 70S ribosome. The polypeptide is Large ribosomal subunit protein uL2 (Akkermansia muciniphila (strain ATCC BAA-835 / DSM 22959 / JCM 33894 / BCRC 81048 / CCUG 64013 / CIP 107961 / Muc)).